A 182-amino-acid polypeptide reads, in one-letter code: Adenylate kinase (182 aa).

12–17 serves as a coordination point for ATP; the sequence is GAGKGT. Residues 32–61 form an NMP region; the sequence is STGELLRKEIEMNTALGIQVKDIMNRGELV. Residues T33, R38, 59–61, 85–88, and Q92 each bind AMP; these read ELV and GYPR. The segment at 126 to 132 is LID; it reads LRGRKDD. Residue R127 participates in ATP binding. R129 and R140 together coordinate AMP. R168 contributes to the ATP binding site.

This sequence belongs to the adenylate kinase family. Monomer.

It is found in the cytoplasm. The catalysed reaction is AMP + ATP = 2 ADP. It functions in the pathway purine metabolism; AMP biosynthesis via salvage pathway; AMP from ADP: step 1/1. In terms of biological role, catalyzes the reversible transfer of the terminal phosphate group between ATP and AMP. Plays an important role in cellular energy homeostasis and in adenine nucleotide metabolism. The protein is Adenylate kinase of Prochlorococcus marinus (strain MIT 9301).